The chain runs to 444 residues: Bifunctional protein GlmU (444 aa).

The tract at residues 1-226 is pyrophosphorylase; it reads MTDSTHRTTA…EAELAGVNSR (226 aa). UDP-N-acetyl-alpha-D-glucosamine contacts are provided by residues 13 to 16, Lys27, Gln75, and 80 to 81; these read LAAG and GT. Asp103 provides a ligand contact to Mg(2+). UDP-N-acetyl-alpha-D-glucosamine contacts are provided by Gly139, Glu153, Asn168, and Asn224. Mg(2+) is bound at residue Asn224. The linker stretch occupies residues 227 to 247; that stretch reads SELARAEATLQTRLRNAAMDA. An N-acetyltransferase region spans residues 248 to 444; that stretch reads GVTLVAPETV…QSLKARKEQG (197 aa). UDP-N-acetyl-alpha-D-glucosamine is bound by residues Arg313 and Lys331. His343 (proton acceptor) is an active-site residue. Residues Tyr346 and Asn357 each contribute to the UDP-N-acetyl-alpha-D-glucosamine site. Residues Ala360, 366-367, Ser385, Ala403, and Arg420 contribute to the acetyl-CoA site; that span reads NY.

This sequence in the N-terminal section; belongs to the N-acetylglucosamine-1-phosphate uridyltransferase family. In the C-terminal section; belongs to the transferase hexapeptide repeat family. In terms of assembly, homotrimer. Requires Mg(2+) as cofactor.

It localises to the cytoplasm. It carries out the reaction alpha-D-glucosamine 1-phosphate + acetyl-CoA = N-acetyl-alpha-D-glucosamine 1-phosphate + CoA + H(+). It catalyses the reaction N-acetyl-alpha-D-glucosamine 1-phosphate + UTP + H(+) = UDP-N-acetyl-alpha-D-glucosamine + diphosphate. It functions in the pathway nucleotide-sugar biosynthesis; UDP-N-acetyl-alpha-D-glucosamine biosynthesis; N-acetyl-alpha-D-glucosamine 1-phosphate from alpha-D-glucosamine 6-phosphate (route II): step 2/2. It participates in nucleotide-sugar biosynthesis; UDP-N-acetyl-alpha-D-glucosamine biosynthesis; UDP-N-acetyl-alpha-D-glucosamine from N-acetyl-alpha-D-glucosamine 1-phosphate: step 1/1. Its pathway is bacterial outer membrane biogenesis; LPS lipid A biosynthesis. Catalyzes the last two sequential reactions in the de novo biosynthetic pathway for UDP-N-acetylglucosamine (UDP-GlcNAc). The C-terminal domain catalyzes the transfer of acetyl group from acetyl coenzyme A to glucosamine-1-phosphate (GlcN-1-P) to produce N-acetylglucosamine-1-phosphate (GlcNAc-1-P), which is converted into UDP-GlcNAc by the transfer of uridine 5-monophosphate (from uridine 5-triphosphate), a reaction catalyzed by the N-terminal domain. This is Bifunctional protein GlmU from Gluconobacter oxydans (strain 621H) (Gluconobacter suboxydans).